The following is a 99-amino-acid chain: Small ribosomal subunit protein bS18 (99 aa).

It belongs to the bacterial ribosomal protein bS18 family. In terms of assembly, part of the 30S ribosomal subunit. Forms a tight heterodimer with protein bS6.

In terms of biological role, binds as a heterodimer with protein bS6 to the central domain of the 16S rRNA, where it helps stabilize the platform of the 30S subunit. The chain is Small ribosomal subunit protein bS18 from Christiangramia forsetii (strain DSM 17595 / CGMCC 1.15422 / KT0803) (Gramella forsetii).